A 189-amino-acid chain; its full sequence is Apolipoprotein D (189 aa).

An N-terminal signal peptide occupies residues 1–21 (MAPTLLLLLPALAGLISVAQG). Position 22 is a pyrrolidone carboxylic acid (glutamine 22). 2 disulfide bridges follow: cysteine 29–cysteine 135 and cysteine 62–cysteine 186. N-linked (GlcNAc...) asparagine glycosylation is found at asparagine 66 and asparagine 99.

The protein belongs to the calycin superfamily. Lipocalin family. As to quaternary structure, homodimer. As to expression, most heavily expressed in adrenal gland, lung, brain, testis and spleen.

Its subcellular location is the secreted. In terms of biological role, APOD occurs in the macromolecular complex with lecithin-transport and binding of bilin. Appears to be able to transport a variety of ligands in a number of different contexts. The sequence is that of Apolipoprotein D (APOD) from Oryctolagus cuniculus (Rabbit).